Here is a 95-residue protein sequence, read N- to C-terminus: Small ribosomal subunit protein uS19 (95 aa).

Residues 76–95 (PTRRFGGHADKKAKKGELKK) are disordered. Residues 82–95 (GHADKKAKKGELKK) show a composition bias toward basic and acidic residues.

Belongs to the universal ribosomal protein uS19 family.

In terms of biological role, protein S19 forms a complex with S13 that binds strongly to the 16S ribosomal RNA. This Thermotoga maritima (strain ATCC 43589 / DSM 3109 / JCM 10099 / NBRC 100826 / MSB8) protein is Small ribosomal subunit protein uS19 (rpsS).